The sequence spans 266 residues: MPKGKKAKGKKVAPAPAVVKKQEAKKVVNPLFEKRPKNFGIGQDIQPKRDLTRFVKWPRYIRLQRQRAILYKRLKVPPAINQFTQALDRQTATQLLKLAHKYRPETKQEKKQRLLARAEKKAAGKGDVPTKRPPVLRAGVNTVTTLVENKKAQLVVIAHDVDPIELVVFLPALCRKMGVPYCIIKGKARLGRLVHRKTCTTVAFTQVNSEDKGALAKLVEAIRTNYNDRYDEIRRHWGGNVLGPKSVARIAKLEKAKAKELATKLG.

Glycyl lysine isopeptide (Lys-Gly) (interchain with G-Cter in SUMO2) cross-links involve residues lysine 11, lysine 20, and lysine 21. Lysine 34 carries the post-translational modification N6-acetyllysine. A Glycyl lysine isopeptide (Lys-Gly) (interchain with G-Cter in SUMO2) cross-link involves residue lysine 48. Lysine 97 is modified (N6-acetyllysine; alternate). A Glycyl lysine isopeptide (Lys-Gly) (interchain with G-Cter in SUMO2); alternate cross-link involves residue lysine 97. Residue lysine 125 forms a Glycyl lysine isopeptide (Lys-Gly) (interchain with G-Cter in SUMO2) linkage. At lysine 217 the chain carries N6-acetyllysine. Lysine 245 participates in a covalent cross-link: Glycyl lysine isopeptide (Lys-Gly) (interchain with G-Cter in SUMO2).

It belongs to the eukaryotic ribosomal protein eL8 family. In terms of assembly, component of the large ribosomal subunit. Interacts with CRY1. Interacts with DICER1, AGO2, TARBP2, MOV10 and EIF6; they form a large RNA-induced silencing complex (RISC).

It localises to the cytoplasm. In terms of biological role, component of the large ribosomal subunit. The ribosome is a large ribonucleoprotein complex responsible for the synthesis of proteins in the cell. This Rattus norvegicus (Rat) protein is Large ribosomal subunit protein eL8 (Rpl7a).